The sequence spans 257 residues: N-acetylglucosaminyldiphosphoundecaprenol N-acetyl-beta-D-mannosaminyltransferase (257 aa).

Belongs to the glycosyltransferase 26 family. TagA/TarA subfamily.

It catalyses the reaction UDP-N-acetyl-alpha-D-mannosamine + N-acetyl-alpha-D-glucosaminyl-di-trans,octa-cis-undecaprenyl diphosphate = N-acetyl-beta-D-mannosaminyl-(1-&gt;4)-N-acetyl-alpha-D-glucosaminyl di-trans,octa-cis-undecaprenyl diphosphate + UDP + H(+). Its pathway is cell wall biogenesis; poly(ribitol phosphate) teichoic acid biosynthesis. Catalyzes the conversion of GlcNAc-PP-undecaprenol into ManNAc-GlcNAc-PP-undecaprenol, the first committed lipid intermediate in the de novo synthesis of teichoic acid. In Bacillus spizizenii (strain ATCC 23059 / NRRL B-14472 / W23) (Bacillus subtilis subsp. spizizenii), this protein is N-acetylglucosaminyldiphosphoundecaprenol N-acetyl-beta-D-mannosaminyltransferase.